The following is a 229-amino-acid chain: Urease accessory protein UreF (229 aa).

This sequence belongs to the UreF family. As to quaternary structure, ureD, UreF and UreG form a complex that acts as a GTP-hydrolysis-dependent molecular chaperone, activating the urease apoprotein by helping to assemble the nickel containing metallocenter of UreC. The UreE protein probably delivers the nickel.

It localises to the cytoplasm. Its function is as follows. Required for maturation of urease via the functional incorporation of the urease nickel metallocenter. The chain is Urease accessory protein UreF from Staphylococcus aureus (strain MRSA252).